The sequence spans 182 residues: Lipoprotein signal peptidase (182 aa).

4 helical membrane-spanning segments follow: residues 12-32, 40-60, 70-90, and 97-117; these read FLWI…TVID, IQVL…AFSF, WFFT…LKQS, and LPVA…DRLV. Catalysis depends on residues aspartate 123 and aspartate 141. The helical transmembrane segment at 136 to 156 threads the bilayer; the sequence is AFNIADSAIFIGAALLIIDMF. Positions 161-182 are disordered; the sequence is KKSEENGAESKAGSANSSETIK. Residues 173-182 show a composition bias toward polar residues; it reads GSANSSETIK.

It belongs to the peptidase A8 family.

It localises to the cell inner membrane. The enzyme catalyses Release of signal peptides from bacterial membrane prolipoproteins. Hydrolyzes -Xaa-Yaa-Zaa-|-(S,diacylglyceryl)Cys-, in which Xaa is hydrophobic (preferably Leu), and Yaa (Ala or Ser) and Zaa (Gly or Ala) have small, neutral side chains.. Its pathway is protein modification; lipoprotein biosynthesis (signal peptide cleavage). Functionally, this protein specifically catalyzes the removal of signal peptides from prolipoproteins. This chain is Lipoprotein signal peptidase, found in Alteromonas mediterranea (strain DSM 17117 / CIP 110805 / LMG 28347 / Deep ecotype).